The primary structure comprises 29 residues: Cyclotide mech-7 (29 aa).

Positions 1–29 (GIPICGETCTIGTCNTPGCTCSWPVCTRD) form a cross-link, cyclopeptide (Gly-Asp). Disulfide bonds link cysteine 5–cysteine 19, cysteine 9–cysteine 21, and cysteine 14–cysteine 26.

This is a cyclic peptide. Post-translationally, contains 3 disulfide bonds.

In terms of biological role, probably participates in a plant defense mechanism (Potential). Binds to and induces leakage in phospholipd membranes, particularly ones containing 1-palmitoyl-2-oleophosphatidylethanolamine (POPE). The protein is Cyclotide mech-7 of Melicytus chathamicus (Chatham Island mahoe).